Here is a 933-residue protein sequence, read N- to C-terminus: Isoleucine--tRNA ligase (933 aa).

The short motif at 57-67 (PYANGNIHMGH) is the 'HIGH' region element. Glutamate 556 lines the L-isoleucyl-5'-AMP pocket. Positions 597–601 (KMSKS) match the 'KMSKS' region motif. Lysine 600 is a binding site for ATP. Zn(2+) contacts are provided by cysteine 891, cysteine 894, cysteine 911, and cysteine 914.

This sequence belongs to the class-I aminoacyl-tRNA synthetase family. IleS type 1 subfamily. In terms of assembly, monomer. It depends on Zn(2+) as a cofactor.

It localises to the cytoplasm. The catalysed reaction is tRNA(Ile) + L-isoleucine + ATP = L-isoleucyl-tRNA(Ile) + AMP + diphosphate. Functionally, catalyzes the attachment of isoleucine to tRNA(Ile). As IleRS can inadvertently accommodate and process structurally similar amino acids such as valine, to avoid such errors it has two additional distinct tRNA(Ile)-dependent editing activities. One activity is designated as 'pretransfer' editing and involves the hydrolysis of activated Val-AMP. The other activity is designated 'posttransfer' editing and involves deacylation of mischarged Val-tRNA(Ile). In Pediococcus pentosaceus (strain ATCC 25745 / CCUG 21536 / LMG 10740 / 183-1w), this protein is Isoleucine--tRNA ligase.